The primary structure comprises 212 residues: ATP-dependent dethiobiotin synthetase BioD (212 aa).

13-18 (GVGKTV) contacts ATP. Thr17 contributes to the Mg(2+) binding site. Residue Lys33 is part of the active site. Glu100 is a Mg(2+) binding site. ATP-binding positions include 100 to 103 (EGAG) and 184 to 186 (PHL).

This sequence belongs to the dethiobiotin synthetase family. In terms of assembly, homodimer. Requires Mg(2+) as cofactor.

Its subcellular location is the cytoplasm. It catalyses the reaction (7R,8S)-7,8-diammoniononanoate + CO2 + ATP = (4R,5S)-dethiobiotin + ADP + phosphate + 3 H(+). It participates in cofactor biosynthesis; biotin biosynthesis; biotin from 7,8-diaminononanoate: step 1/2. Catalyzes a mechanistically unusual reaction, the ATP-dependent insertion of CO2 between the N7 and N8 nitrogen atoms of 7,8-diaminopelargonic acid (DAPA, also called 7,8-diammoniononanoate) to form a ureido ring. In Rhodopseudomonas palustris (strain BisB5), this protein is ATP-dependent dethiobiotin synthetase BioD.